A 145-amino-acid polypeptide reads, in one-letter code: Synaptojanin-2-binding protein (145 aa).

Topologically, residues 1-117 (MNGRVDYLVT…GHRGEGDPSG (117 aa)) are cytoplasmic. The 88-residue stretch at 13 to 100 (EINLTRGPSG…AVSLRVQHRL (88 aa)) folds into the PDZ domain. The chain crosses the membrane as a helical span at residues 118 to 138 (IPIFMVLVPVFALTMVAAWAF). Residues 139 to 145 (MRYRQQL) lie on the Mitochondrial intermembrane side of the membrane.

Binds (via the PDZ domain) to isoform 2A of SYNJ2 (via the unique motif in the C-terminus). Interacts (via C-terminus) with RALBP1. Interacts (via PDZ domain) with ACVR2A (via C-terminus) and ACVR2B (via C-terminus). Forms a ternary complex with ACVR2A and RALBP1. Interacts with MAPK12. Interacts with DLL1; enhances DLL1 protein stability, and promotes notch signaling in endothelial cells.

Its subcellular location is the mitochondrion outer membrane. Functionally, regulates endocytosis of activin type 2 receptor kinases through the Ral/RALBP1-dependent pathway and may be involved in suppression of activin-induced signal transduction. The sequence is that of Synaptojanin-2-binding protein (SYNJ2BP) from Homo sapiens (Human).